The primary structure comprises 584 residues: Protein disulfide-isomerase-like protein of the testis (584 aa).

Positions 1 to 20 (MDLLWMPLLLVAACVSAVHS) are cleaved as a signal peptide. Residues asparagine 58, asparagine 128, asparagine 160, and asparagine 340 are each glycosylated (N-linked (GlcNAc...) asparagine). One can recognise a Thioredoxin domain in the interval 388 to 451 (LVKQLVGKNF…IAKIDVTAND (64 aa)). Asparagine 540 carries an N-linked (GlcNAc...) asparagine glycan. The short motif at 581–584 (KEEL) is the Prevents secretion from ER element.

This sequence belongs to the protein disulfide isomerase family. In terms of assembly, homodimer. The homodimer is not disulfide-linked. Interacts with ERO1A and CLGN. In terms of processing, N-glycosylated. As to expression, testis-specific.

Its subcellular location is the endoplasmic reticulum. In terms of biological role, probable redox-inactive chaperone involved in spermatogenesis. This is Protein disulfide-isomerase-like protein of the testis (PDILT) from Homo sapiens (Human).